We begin with the raw amino-acid sequence, 110 residues long: Phosphoribosyl-ATP pyrophosphatase (110 aa).

The protein belongs to the PRA-PH family.

The protein resides in the cytoplasm. The catalysed reaction is 1-(5-phospho-beta-D-ribosyl)-ATP + H2O = 1-(5-phospho-beta-D-ribosyl)-5'-AMP + diphosphate + H(+). It participates in amino-acid biosynthesis; L-histidine biosynthesis; L-histidine from 5-phospho-alpha-D-ribose 1-diphosphate: step 2/9. The sequence is that of Phosphoribosyl-ATP pyrophosphatase (hisE) from Clostridium acetobutylicum (strain ATCC 824 / DSM 792 / JCM 1419 / IAM 19013 / LMG 5710 / NBRC 13948 / NRRL B-527 / VKM B-1787 / 2291 / W).